Here is a 474-residue protein sequence, read N- to C-terminus: Bifunctional protein HldE (474 aa).

The segment at 1–318 (MKLSMPRFDQ…RAIQREEGSE (318 aa)) is ribokinase. 194-197 (NLSE) serves as a coordination point for ATP. Residue Asp-263 is part of the active site. A cytidylyltransferase region spans residues 343–474 (FTNGCFDILH…AIVEKIRGQG (132 aa)).

In the N-terminal section; belongs to the carbohydrate kinase PfkB family. The protein in the C-terminal section; belongs to the cytidylyltransferase family. In terms of assembly, homodimer.

It catalyses the reaction D-glycero-beta-D-manno-heptose 7-phosphate + ATP = D-glycero-beta-D-manno-heptose 1,7-bisphosphate + ADP + H(+). The catalysed reaction is D-glycero-beta-D-manno-heptose 1-phosphate + ATP + H(+) = ADP-D-glycero-beta-D-manno-heptose + diphosphate. Its pathway is nucleotide-sugar biosynthesis; ADP-L-glycero-beta-D-manno-heptose biosynthesis; ADP-L-glycero-beta-D-manno-heptose from D-glycero-beta-D-manno-heptose 7-phosphate: step 1/4. It participates in nucleotide-sugar biosynthesis; ADP-L-glycero-beta-D-manno-heptose biosynthesis; ADP-L-glycero-beta-D-manno-heptose from D-glycero-beta-D-manno-heptose 7-phosphate: step 3/4. Functionally, catalyzes the phosphorylation of D-glycero-D-manno-heptose 7-phosphate at the C-1 position to selectively form D-glycero-beta-D-manno-heptose-1,7-bisphosphate. Catalyzes the ADP transfer from ATP to D-glycero-beta-D-manno-heptose 1-phosphate, yielding ADP-D-glycero-beta-D-manno-heptose. This chain is Bifunctional protein HldE, found in Pseudomonas syringae pv. syringae (strain B728a).